The chain runs to 351 residues: Holliday junction branch migration complex subunit RuvB (351 aa).

Residues 1-186 (MDEKIETRLI…FGIVQRLEFY (186 aa)) are large ATPase domain (RuvB-L). ATP-binding positions include isoleucine 25, arginine 26, glycine 67, lysine 70, threonine 71, threonine 72, 133–135 (EDF), arginine 176, tyrosine 186, and arginine 223. Threonine 71 lines the Mg(2+) pocket. The tract at residues 187–257 (RIPDLIHIVK…IAKEALDLLN (71 aa)) is small ATPAse domain (RuvB-S). Residues 260–351 (IRGLDVMDRK…ENFDLLGKVE (92 aa)) are head domain (RuvB-H). Positions 296, 315, and 320 each coordinate DNA.

Belongs to the RuvB family. As to quaternary structure, homohexamer. Forms an RuvA(8)-RuvB(12)-Holliday junction (HJ) complex. HJ DNA is sandwiched between 2 RuvA tetramers; dsDNA enters through RuvA and exits via RuvB. An RuvB hexamer assembles on each DNA strand where it exits the tetramer. Each RuvB hexamer is contacted by two RuvA subunits (via domain III) on 2 adjacent RuvB subunits; this complex drives branch migration. In the full resolvosome a probable DNA-RuvA(4)-RuvB(12)-RuvC(2) complex forms which resolves the HJ.

Its subcellular location is the cytoplasm. It carries out the reaction ATP + H2O = ADP + phosphate + H(+). The RuvA-RuvB-RuvC complex processes Holliday junction (HJ) DNA during genetic recombination and DNA repair, while the RuvA-RuvB complex plays an important role in the rescue of blocked DNA replication forks via replication fork reversal (RFR). RuvA specifically binds to HJ cruciform DNA, conferring on it an open structure. The RuvB hexamer acts as an ATP-dependent pump, pulling dsDNA into and through the RuvAB complex. RuvB forms 2 homohexamers on either side of HJ DNA bound by 1 or 2 RuvA tetramers; 4 subunits per hexamer contact DNA at a time. Coordinated motions by a converter formed by DNA-disengaged RuvB subunits stimulates ATP hydrolysis and nucleotide exchange. Immobilization of the converter enables RuvB to convert the ATP-contained energy into a lever motion, pulling 2 nucleotides of DNA out of the RuvA tetramer per ATP hydrolyzed, thus driving DNA branch migration. The RuvB motors rotate together with the DNA substrate, which together with the progressing nucleotide cycle form the mechanistic basis for DNA recombination by continuous HJ branch migration. Branch migration allows RuvC to scan DNA until it finds its consensus sequence, where it cleaves and resolves cruciform DNA. This is Holliday junction branch migration complex subunit RuvB from Coxiella burnetii (strain CbuG_Q212) (Coxiella burnetii (strain Q212)).